The sequence spans 91 residues: Small ribosomal subunit protein uS19 (91 aa).

Positions 72–91 are disordered; it reads GEFSPTRKFGGHGDDKKKKK. Residues 82–91 show a composition bias toward basic and acidic residues; that stretch reads GHGDDKKKKK.

It belongs to the universal ribosomal protein uS19 family.

In terms of biological role, protein S19 forms a complex with S13 that binds strongly to the 16S ribosomal RNA. This chain is Small ribosomal subunit protein uS19, found in Spiroplasma kunkelii.